We begin with the raw amino-acid sequence, 890 residues long: Alanine--tRNA ligase (890 aa).

Zn(2+)-binding residues include histidine 569, histidine 573, cysteine 671, and histidine 675.

The protein belongs to the class-II aminoacyl-tRNA synthetase family. The cofactor is Zn(2+).

It is found in the cytoplasm. The catalysed reaction is tRNA(Ala) + L-alanine + ATP = L-alanyl-tRNA(Ala) + AMP + diphosphate. Catalyzes the attachment of alanine to tRNA(Ala) in a two-step reaction: alanine is first activated by ATP to form Ala-AMP and then transferred to the acceptor end of tRNA(Ala). Also edits incorrectly charged Ser-tRNA(Ala) and Gly-tRNA(Ala) via its editing domain. This is Alanine--tRNA ligase from Synechococcus sp. (strain CC9902).